Reading from the N-terminus, the 269-residue chain is Aminoglycoside (3'') (9) adenylyltransferase (269 aa).

The catalysed reaction is streptomycin + ATP = 3''-O-adenylylstreptomycin + diphosphate. It carries out the reaction spectinomycin + ATP = 9-O-adenylylspectinomycin + diphosphate. Functionally, mediates bacterial resistance to the antibiotic spectinomycin and probably also to streptomycin. This Rhizobium radiobacter (Agrobacterium tumefaciens) protein is Aminoglycoside (3'') (9) adenylyltransferase.